The following is a 274-amino-acid chain: NADPH-dependent 7-cyano-7-deazaguanine reductase (274 aa).

Residue 81–83 (IES) participates in substrate binding. 83-84 (SK) contributes to the NADPH binding site. The Thioimide intermediate role is filled by Cys-182. The active-site Proton donor is the Asp-189. A substrate-binding site is contributed by 221 to 222 (HE). 250–251 (RG) provides a ligand contact to NADPH.

This sequence belongs to the GTP cyclohydrolase I family. QueF type 2 subfamily. Homodimer.

Its subcellular location is the cytoplasm. It carries out the reaction 7-aminomethyl-7-carbaguanine + 2 NADP(+) = 7-cyano-7-deazaguanine + 2 NADPH + 3 H(+). It participates in tRNA modification; tRNA-queuosine biosynthesis. Its function is as follows. Catalyzes the NADPH-dependent reduction of 7-cyano-7-deazaguanine (preQ0) to 7-aminomethyl-7-deazaguanine (preQ1). In Hahella chejuensis (strain KCTC 2396), this protein is NADPH-dependent 7-cyano-7-deazaguanine reductase.